A 416-amino-acid chain; its full sequence is S-adenosylmethionine synthase (416 aa).

His16 provides a ligand contact to ATP. Asp18 contacts Mg(2+). Glu44 contacts K(+). Glu57 and Gln100 together coordinate L-methionine. A flexible loop region spans residues 100–110 (QSPDIAQGVTQ). ATP is bound by residues 175–177 (DGK), 251–252 (KF), Asp260, 266–267 (RK), Ala283, and Lys287. Asp260 is an L-methionine binding site. L-methionine is bound at residue Lys291.

This sequence belongs to the AdoMet synthase family. In terms of assembly, homotetramer; dimer of dimers. It depends on Mg(2+) as a cofactor. The cofactor is K(+).

The protein localises to the cytoplasm. It catalyses the reaction L-methionine + ATP + H2O = S-adenosyl-L-methionine + phosphate + diphosphate. It participates in amino-acid biosynthesis; S-adenosyl-L-methionine biosynthesis; S-adenosyl-L-methionine from L-methionine: step 1/1. In terms of biological role, catalyzes the formation of S-adenosylmethionine (AdoMet) from methionine and ATP. The overall synthetic reaction is composed of two sequential steps, AdoMet formation and the subsequent tripolyphosphate hydrolysis which occurs prior to release of AdoMet from the enzyme. This Crocosphaera subtropica (strain ATCC 51142 / BH68) (Cyanothece sp. (strain ATCC 51142)) protein is S-adenosylmethionine synthase.